We begin with the raw amino-acid sequence, 492 residues long: N-succinylglutamate 5-semialdehyde dehydrogenase (492 aa).

Position 220–225 (220–225) interacts with NAD(+); the sequence is GSANTG. Catalysis depends on residues Glu-243 and Cys-277.

This sequence belongs to the aldehyde dehydrogenase family. AstD subfamily.

The enzyme catalyses N-succinyl-L-glutamate 5-semialdehyde + NAD(+) + H2O = N-succinyl-L-glutamate + NADH + 2 H(+). It functions in the pathway amino-acid degradation; L-arginine degradation via AST pathway; L-glutamate and succinate from L-arginine: step 4/5. Functionally, catalyzes the NAD-dependent reduction of succinylglutamate semialdehyde into succinylglutamate. This chain is N-succinylglutamate 5-semialdehyde dehydrogenase, found in Escherichia coli O17:K52:H18 (strain UMN026 / ExPEC).